Here is a 271-residue protein sequence, read N- to C-terminus: Thiosulfate sulfurtransferase (271 aa).

2 consecutive Rhodanese domains span residues 21-129 (GAPE…ALDR) and 159-270 (GAAD…TPVE). Cysteine 230 (cysteine persulfide intermediate) is an active-site residue.

Its subcellular location is the cytoplasm. The catalysed reaction is thiosulfate + hydrogen cyanide = thiocyanate + sulfite + 2 H(+). Catalyzes the sulfur transfer reaction from thiosulfate to cyanide, thus converting cyanide to the less toxic thiocyanate. Contributes to P.aeruginosa survival under cyanogenic conditions, and thus provides the bacterium with a defense mechanism against endogenous cyanide toxicity. Is the main cytoplasmic rhodanese in P.aeruginosa, accounting for 90% of total rhodanese activity. The chain is Thiosulfate sulfurtransferase from Pseudomonas aeruginosa (strain ATCC 15692 / DSM 22644 / CIP 104116 / JCM 14847 / LMG 12228 / 1C / PRS 101 / PAO1).